The primary structure comprises 359 residues: S-geranylgeranyl-glutathione receptor P2RY8 (359 aa).

The Extracellular portion of the chain corresponds to 1–19 (MQVPNSTGPDNATLQMLRN). N-linked (GlcNAc...) asparagine glycans are attached at residues Asn-5 and Asn-11. A helical transmembrane segment spans residues 20 to 40 (PAIAVALPVVYSLVAAVSIPG). The Cytoplasmic portion of the chain corresponds to 41–57 (NLFSLWVLCRRMGPRSP). A helical membrane pass occupies residues 58 to 78 (SVIFMINLSVTDLMLASVLPF). Over 79-88 (QIYYHCNRHH) the chain is Extracellular. Residues 89–109 (WVFGVLLCNVVTVAFYANMYS) traverse the membrane as a helical segment. Residues 110-138 (SILTMTCISVERFLGVLYPLSSKRWRRRR) lie on the Cytoplasmic side of the membrane. A helical transmembrane segment spans residues 139–159 (YAVAACAGTWLLLLTALSPLA). Residues 160-187 (RTDLTYPVHALGIITCFDVLKWTMLPSV) lie on the Extracellular side of the membrane. A helical transmembrane segment spans residues 188–208 (AMWAVFLFTIFILLFLIPFVI). Over 209–237 (TVACYTATILKLLRTEEAHGREQRRRAVG) the chain is Cytoplasmic. A helical membrane pass occupies residues 238-258 (LAAVVLLAFVTCFAPNNFVLL). Residues 259–275 (AHIVSRLFYGKSYYHVY) lie on the Extracellular side of the membrane. Residues 276–296 (KLTLCLSCLNNCLDPFVYYFA) form a helical membrane-spanning segment. At 297 to 359 (SREFQLRLRE…PGLQRQESVF (63 aa)) the chain is on the cytoplasmic side. The segment at 329–359 (RTTSVRSEAGAHPEGMEGATRPGLQRQESVF) is disordered.

The protein belongs to the G-protein coupled receptor 1 family. As to expression, barely detectable in normal blood leukocytes. Weaker expression was seen in heart, kidney and lung. Not detected in brain. Expressed in B cells and follicular helper T cells in germinal centers (at protein level).

The protein resides in the cell membrane. Functionally, g protein-coupled receptor for S-geranylgeranyl-glutathione (GGG), an endogenous metabolite present in lymphoid tissues. Couples the binding of GGG to the activation of GNA13 and downstream repression of AKT activation in lymphocytes defining their positioning and growth within lymphoid organs. In lymphoid follicles, confines B cells and follicular helper T cells in germinal centers (GCs) in response to GGG local gradients established by GGT5 (via GGG catabolism) and ABCC1 (via extracellular transport) with lower concentrations of GGG found in the follicular dendritic cell network region around which germinal centers are formed. In the bone marrow, also in response to GGG gradients established by GGT5 and ABCC1, it restricts chemotactic transmigration of B cells, T cells and NK cells from blood vessels to the bone marrow parenchyma. Contributes to GNA13-dependent pathway that suppresses GC B cell growth. The sequence is that of S-geranylgeranyl-glutathione receptor P2RY8 from Homo sapiens (Human).